A 196-amino-acid chain; its full sequence is MESHKPSTNKDDLIFNIIPRKIKQLPESDRNLLEYGSAYIGLNAAFGGLIANSLFRRILNVTQARVASSLPMAVIPFLTANLSYHSFVSLPLSTGNLNCEICTTTRGTLVGFVLGGLYPILLAIPVNGGLAARYESSPLPQRGNIFNYWITISKPVFRKMLFPTLLQTAFAAYLGSRQYKLLIKALQLPEPDLEIQ.

Over 1–34 the chain is Mitochondrial matrix; it reads MESHKPSTNKDDLIFNIIPRKIKQLPESDRNLLE. The helical transmembrane segment at 35–55 threads the bilayer; sequence YGSAYIGLNAAFGGLIANSLF. Topologically, residues 56–57 are mitochondrial intermembrane; sequence RR. Residues 58-78 traverse the membrane as a helical segment; the sequence is ILNVTQARVASSLPMAVIPFL. Over 79-106 the chain is Mitochondrial matrix; it reads TANLSYHSFVSLPLSTGNLNCEICTTTR. Residues 107-127 traverse the membrane as a helical segment; that stretch reads GTLVGFVLGGLYPILLAIPVN. Topologically, residues 128–159 are mitochondrial intermembrane; that stretch reads GGLAARYESSPLPQRGNIFNYWITISKPVFRK. Residues 160–176 traverse the membrane as a helical segment; that stretch reads MLFPTLLQTAFAAYLGS. The Mitochondrial matrix portion of the chain corresponds to 177–196; sequence RQYKLLIKALQLPEPDLEIQ.

It belongs to the TMEM126 family. In terms of assembly, interacts with OXA1L; promoting cotranslational quality control in mitochondria.

The protein resides in the mitochondrion inner membrane. Its function is as follows. Protein required for the cotranslational protein quality control in the inner membrane of the mitochondria. Associates with newly synthesized polypeptides and may act as a chaperone that cooperates with OXA1L for the insertion of newly synthesized mitochondrial proteins into the inner membrane. Required for the assembly of the ND4 module of mitochondrial complex I. The polypeptide is Transmembrane protein 126A (Tmem126a) (Rattus norvegicus (Rat)).